The following is a 174-amino-acid chain: Protein GrpE (174 aa).

The interval 1–35 is disordered; that stretch reads MAQDIKNEEVEEVQEEEVVETAEETTPEKSELDLA. A compositionally biased stretch (acidic residues) spans 9–25; sequence EVEEVQEEEVVETAEET. Positions 26–35 are enriched in basic and acidic residues; it reads TPEKSELDLA.

It belongs to the GrpE family. As to quaternary structure, homodimer.

It is found in the cytoplasm. Its function is as follows. Participates actively in the response to hyperosmotic and heat shock by preventing the aggregation of stress-denatured proteins, in association with DnaK and GrpE. It is the nucleotide exchange factor for DnaK and may function as a thermosensor. Unfolded proteins bind initially to DnaJ; upon interaction with the DnaJ-bound protein, DnaK hydrolyzes its bound ATP, resulting in the formation of a stable complex. GrpE releases ADP from DnaK; ATP binding to DnaK triggers the release of the substrate protein, thus completing the reaction cycle. Several rounds of ATP-dependent interactions between DnaJ, DnaK and GrpE are required for fully efficient folding. This is Protein GrpE from Streptococcus pneumoniae (strain ATCC 700669 / Spain 23F-1).